Consider the following 263-residue polypeptide: Shikimate dehydrogenase (NADP(+)) (263 aa).

Shikimate contacts are provided by residues 21-23 (TLS) and threonine 67. The Proton acceptor role is filled by lysine 71. An NADP(+)-binding site is contributed by glutamate 83. Shikimate contacts are provided by asparagine 92 and aspartate 103. Residues 126–130 (GAGGA) and leucine 204 contribute to the NADP(+) site. Residue tyrosine 206 coordinates shikimate. Glycine 227 provides a ligand contact to NADP(+).

It belongs to the shikimate dehydrogenase family. In terms of assembly, homodimer.

It catalyses the reaction shikimate + NADP(+) = 3-dehydroshikimate + NADPH + H(+). It functions in the pathway metabolic intermediate biosynthesis; chorismate biosynthesis; chorismate from D-erythrose 4-phosphate and phosphoenolpyruvate: step 4/7. Involved in the biosynthesis of the chorismate, which leads to the biosynthesis of aromatic amino acids. Catalyzes the reversible NADPH linked reduction of 3-dehydroshikimate (DHSA) to yield shikimate (SA). The chain is Shikimate dehydrogenase (NADP(+)) from Sulfolobus acidocaldarius (strain ATCC 33909 / DSM 639 / JCM 8929 / NBRC 15157 / NCIMB 11770).